A 299-amino-acid chain; its full sequence is tRNA dimethylallyltransferase (299 aa).

Residue 11–18 coordinates ATP; that stretch reads GPTAVGKT. Position 13-18 (13-18) interacts with substrate; sequence TAVGKT. The interaction with substrate tRNA stretch occupies residues 36-39; that stretch reads DSQQ.

This sequence belongs to the IPP transferase family. Monomer. It depends on Mg(2+) as a cofactor.

It carries out the reaction adenosine(37) in tRNA + dimethylallyl diphosphate = N(6)-dimethylallyladenosine(37) in tRNA + diphosphate. In terms of biological role, catalyzes the transfer of a dimethylallyl group onto the adenine at position 37 in tRNAs that read codons beginning with uridine, leading to the formation of N6-(dimethylallyl)adenosine (i(6)A). This is tRNA dimethylallyltransferase from Streptococcus pyogenes serotype M4 (strain MGAS10750).